Consider the following 717-residue polypeptide: MAKSPGNSTLEDSLGQYQRSLRERANRSIHQLKCALREVDVTVEEDALDPSTSINVENEDTGVAWHELQHSHAVNQLKALLRQQTNKENETSPPRRRKLSPSRPSECDDGSMPTMHNLVPIINDQSQYIHHLEAEVKFCKDELSGMKNRVQVVVLENERLQQELKSQRPEETLREQTFLDASGNMQNSWIMTREDSRVDEAAKRPFSHGDAETGKTASTGDANKWKLELERLKLTYEAKTDLLESQLMLLRKDLAEYQKTCEDLKERLKHKESLLAASASSRVGGLCLKCAQHEAVLSQTHSNVHIQTIERLTKERDDLMSVLVSVRSSLAEAQKRETSAYEQVKHAVQMTEEANFEKTKALIQCEQLKSELERQTERLEKELASQQEKRAVEKEMIKKEVAREREDAESKMLILSQNIAKLEAQVEKVTREKTAAVSHLEEIQNHVASQEMDVTKVCGEMRFQLNKTKMEKDEVEKEHREYKAKSHKDLEMKVQEIEKLRLELSESEQHVEQEQQKAARARQECLRVTELLGEAERQLHLTRLEKDSIQQSFSNEAKAQALQAQQREQELTQKIQQMETQHDKTESEQYLLLTSQNTFLTKLKEECCLLAKKLEKVSLKSRSQIVRLSQEKRYLCDKLEKLQKRNDELEEQCIQHGRVHETMKERLRQLDKHGQATAQQLVQLLNKQNQLLLERQNLSEEVARLRAQLPSMPQSDC.

A phosphoserine mark is found at Ser-4 and Ser-28. Positions 84-115 are disordered; the sequence is QTNKENETSPPRRRKLSPSRPSECDDGSMPTM. Coiled-coil stretches lie at residues 129–168, 221–278, 352–590, and 622–712; these read IHHL…KSQR, DANK…LAAS, EEAN…SEQY, and RSQI…LPSM. Residues 216–717 form a sufficient for homodimerization region; that stretch reads TASTGDANKW…QLPSMPQSDC (502 aa).

As to quaternary structure, homodimer. Interacts with OFD1; the interaction is direct. Interacts with FAM161A. Interacts with RABEP2, ERC1 and CEP131. As to expression, expressed in liver, kidney, spleen, brain, heart and muscle. Expressed in photoreceptor cells of the retina.

The protein resides in the cytoplasm. It localises to the cytoskeleton. Its subcellular location is the microtubule organizing center. The protein localises to the centrosome. It is found in the centriole. The protein resides in the cilium basal body. It localises to the cell junction. Its function is as follows. Plays a role in the establishment of cell polarity and epithelial lumen formation. Also plays an essential role in ciliogenesis and subsequent Hedgehog signaling pathway that requires the presence of intact primary cilia for pathway activation. Mechanistically, interacts with and mediates RABEP2 centrosomal localization which is critical for ciliogenesis. In Mus musculus (Mouse), this protein is Serologically defined colon cancer antigen 8 homolog (Sdccag8).